The primary structure comprises 154 residues: Aspartate carbamoyltransferase regulatory chain (154 aa).

Zn(2+) is bound by residues Cys109, Cys114, Cys138, and Cys141.

It belongs to the PyrI family. In terms of assembly, contains catalytic and regulatory chains. It depends on Zn(2+) as a cofactor.

Its function is as follows. Involved in allosteric regulation of aspartate carbamoyltransferase. In Yersinia pestis, this protein is Aspartate carbamoyltransferase regulatory chain.